The primary structure comprises 272 residues: Zinc finger protein 32 (272 aa).

Residues 50 to 65 (RREKLEQKSPESKALQ) show a composition bias toward basic and acidic residues. Residues 50–69 (RREKLEQKSPESKALQEDSP) are disordered. 3 consecutive C2H2-type zinc fingers follow at residues 76 to 98 (YDCQ…ERIH), 104 to 126 (FECT…QRIH), and 132 to 154 (YQCK…ERLH). Zn(2+) is bound by residues cysteine 78, cysteine 81, histidine 94, histidine 98, cysteine 106, cysteine 109, histidine 122, histidine 126, serine 140, glutamine 143, glycine 156, tyrosine 160, phenylalanine 197, lysine 200, leucine 213, alanine 217, cysteine 246, cysteine 249, histidine 262, and cysteine 266. 2 C2H2-type zinc fingers span residues 160-182 (YECA…RRVH) and 188-210 (YRCD…IRVH). The C2H2-type 6 zinc-finger motif lies at 216–238 (YACSHCRKSFHTRGNCLLHGKVH). The segment at 244 to 266 (YLCGQCGKSFTQRGSLAVHQRSC) adopts a CCHC-type zinc-finger fold.

Belongs to the krueppel C2H2-type zinc-finger protein family.

The protein resides in the nucleus. May be involved in transcriptional regulation. In Mus musculus (Mouse), this protein is Zinc finger protein 32 (Znf32).